The sequence spans 85 residues: Large ribosomal subunit protein bL27 (85 aa).

The tract at residues 1-25 (MAHKKAGGSSRNGRDSHSKRLGVKH) is disordered.

The protein belongs to the bacterial ribosomal protein bL27 family.

The sequence is that of Large ribosomal subunit protein bL27 from Buchnera aphidicola subsp. Baizongia pistaciae (strain Bp).